We begin with the raw amino-acid sequence, 286 residues long: ATP synthase gamma chain (286 aa).

It belongs to the ATPase gamma chain family. As to quaternary structure, F-type ATPases have 2 components, CF(1) - the catalytic core - and CF(0) - the membrane proton channel. CF(1) has five subunits: alpha(3), beta(3), gamma(1), delta(1), epsilon(1). CF(0) has three main subunits: a, b and c.

It is found in the cell inner membrane. Produces ATP from ADP in the presence of a proton gradient across the membrane. The gamma chain is believed to be important in regulating ATPase activity and the flow of protons through the CF(0) complex. The protein is ATP synthase gamma chain of Shewanella amazonensis (strain ATCC BAA-1098 / SB2B).